A 359-amino-acid polypeptide reads, in one-letter code: Ribosomal RNA large subunit methyltransferase M (359 aa).

S-adenosyl-L-methionine contacts are provided by residues Ser-186, 219–222 (CPGG), Asp-238, Asp-258, and Asp-275. Lys-304 serves as the catalytic Proton acceptor.

The protein belongs to the class I-like SAM-binding methyltransferase superfamily. RNA methyltransferase RlmE family. RlmM subfamily. Monomer.

It is found in the cytoplasm. The catalysed reaction is cytidine(2498) in 23S rRNA + S-adenosyl-L-methionine = 2'-O-methylcytidine(2498) in 23S rRNA + S-adenosyl-L-homocysteine + H(+). Functionally, catalyzes the 2'-O-methylation at nucleotide C2498 in 23S rRNA. The chain is Ribosomal RNA large subunit methyltransferase M from Vibrio vulnificus (strain YJ016).